A 293-amino-acid chain; its full sequence is AKT-interacting protein homolog A (293 aa).

Residues 1–11 (MNPFWNMSSAS) show a composition bias toward polar residues. The interval 1 to 45 (MNPFWNMSSASVRKRSENDEKISTGDQKISPPRSSSAKKQLPPIP) is disordered. The segment covering 14–23 (KRSENDEKIS) has biased composition (basic and acidic residues). The span at 24–38 (TGDQKISPPRSSSAK) shows a compositional bias: polar residues. The region spanning 75–223 (YLEYSLLAEF…VVDSVKLCNS (149 aa)) is the UBC core domain. Residues 256-266 (AQKKKSEEQSK) are compositionally biased toward basic and acidic residues. Residues 256–293 (AQKKKSEEQSKGLHVSGLSWVKPGSVLPFSKEENSLQT) are disordered.

It belongs to the ubiquitin-conjugating enzyme family. FTS subfamily.

The protein resides in the cytoplasm. It is found in the cell membrane. In terms of biological role, may function to promote vesicle trafficking and/or fusion. May also regulate apoptosis. This chain is AKT-interacting protein homolog A (aktip-a), found in Xenopus laevis (African clawed frog).